A 451-amino-acid polypeptide reads, in one-letter code: Tubulin beta-1 chain (451 aa).

Residues 1 to 4 (MREI) carry the MREI motif motif. Residues glutamine 11, glutamate 69, serine 138, glycine 142, threonine 143, and glycine 144 each contribute to the GTP site. Residue glutamate 69 coordinates Mg(2+). Residue serine 172 is modified to Phosphoserine; by CDK1. Residues asparagine 204 and asparagine 226 each coordinate GTP. A disordered region spans residues 432 to 451 (LEEDEEVTEEAEMEPEDKGH). Residues 433–451 (EEDEEVTEEAEMEPEDKGH) are compositionally biased toward acidic residues. Glutamate 440 is modified (5-glutamyl polyglutamate).

Belongs to the tubulin family. In terms of assembly, dimer of alpha and beta chains. A typical microtubule is a hollow water-filled tube with an outer diameter of 25 nm and an inner diameter of 15 nM. Alpha-beta heterodimers associate head-to-tail to form protofilaments running lengthwise along the microtubule wall with the beta-tubulin subunit facing the microtubule plus end conferring a structural polarity. Microtubules usually have 13 protofilaments but different protofilament numbers can be found in some organisms and specialized cells. Interacts with RANBP10. Mg(2+) serves as cofactor. In terms of processing, some glutamate residues at the C-terminus are polyglutamylated, resulting in polyglutamate chains on the gamma-carboxyl group. Polyglutamylation plays a key role in microtubule severing by spastin (SPAST). SPAST preferentially recognizes and acts on microtubules decorated with short polyglutamate tails: severing activity by SPAST increases as the number of glutamates per tubulin rises from one to eight, but decreases beyond this glutamylation threshold. Glutamylation is also involved in cilia motility. Post-translationally, some glutamate residues at the C-terminus are monoglycylated but not polyglycylated due to the absence of functional TTLL10 in human. Monoglycylation is mainly limited to tubulin incorporated into cilia and flagella axonemes, which is required for their stability and maintenance. Flagella glycylation controls sperm motility. Both polyglutamylation and monoglycylation can coexist on the same protein on adjacent residues, and lowering glycylation levels increases polyglutamylation, and reciprocally. Phosphorylated on Ser-172 by CDK1 during the cell cycle, from metaphase to telophase, but not in interphase. This phosphorylation inhibits tubulin incorporation into microtubules. In terms of tissue distribution, hematopoietic cell-specific. Major isotype in leukocytes, where it represents 50% of all beta-tubulins.

It is found in the cytoplasm. Its subcellular location is the cytoskeleton. Tubulin is the major constituent of microtubules, a cylinder consisting of laterally associated linear protofilaments composed of alpha- and beta-tubulin heterodimers. Microtubules grow by the addition of GTP-tubulin dimers to the microtubule end, where a stabilizing cap forms. Below the cap, tubulin dimers are in GDP-bound state, owing to GTPase activity of alpha-tubulin. The polypeptide is Tubulin beta-1 chain (TUBB1) (Homo sapiens (Human)).